The primary structure comprises 130 residues: Small ribosomal subunit protein uS8 (130 aa).

Belongs to the universal ribosomal protein uS8 family. As to quaternary structure, part of the 30S ribosomal subunit.

In terms of biological role, one of the primary rRNA binding proteins, it binds directly to 16S rRNA central domain where it helps coordinate assembly of the platform of the 30S subunit. The sequence is that of Small ribosomal subunit protein uS8 from Methanosarcina mazei (strain ATCC BAA-159 / DSM 3647 / Goe1 / Go1 / JCM 11833 / OCM 88) (Methanosarcina frisia).